We begin with the raw amino-acid sequence, 625 residues long: tRNA uridine 5-carboxymethylaminomethyl modification enzyme MnmG (625 aa).

14-19 (GAGHAG) serves as a coordination point for FAD. Residue 273 to 287 (GPRYCPSIEDKIVRF) participates in NAD(+) binding.

This sequence belongs to the MnmG family. In terms of assembly, homodimer. Heterotetramer of two MnmE and two MnmG subunits. FAD serves as cofactor.

Its subcellular location is the cytoplasm. NAD-binding protein involved in the addition of a carboxymethylaminomethyl (cmnm) group at the wobble position (U34) of certain tRNAs, forming tRNA-cmnm(5)s(2)U34. This is tRNA uridine 5-carboxymethylaminomethyl modification enzyme MnmG from Clostridium botulinum (strain Loch Maree / Type A3).